The following is a 613-amino-acid chain: MSAGAGTPRRPAVRGSAPHPARGSAPGPRPMPTHHPTRGDKKRARRPGVPTRGDKKRAPRLGVPARGDKKRARRPGVPAREDKKRAPRPGVPTRGDKKRAPRLGVPARGDKKRARRPGVPTRGGVARSGNDGPRVPLALLGAYYPGHVTIRLYDTSARQIRDFAPLTPGCVSIYLCGATVQAAPHIGHIRSGLNFDIMRRWFAYRGYDVTFVRNVTDIDDKIIRKAAEQNRPWWSIGYENERAFNDAYAALGCLPPTYEPRATGHITEMVEMMRGLIERGHAYEADGNVYFDVRSLPGYLSLSNQDLDELRQPSEDGETGKRDLRDFAMWKAAKPGEPSWETPWGRGRPGWHLECSAMAHKYLGEEFDIHGGGIDLIFPHHENEIAQAKGFGDAFARYWVHNAWVTMSGEKMSKSLGNSVLVSEMVKKWPPVVLRYYLGTPHYRSTIEYSEESLREAESAYGRIEGFVQRVTELAGHAVEPAAEVPPAFAEAMDDDLGVPQALAIVHTTVRQGNSALAADDKDAAVARLAEVRAMLGVLGLDPLDAQWAGAQAQGEDLRHVVDSLVRLVLDQREGARARKDWATADAIRDQLGQSGLVIEDSPQGPRWSLGSR.

The tract at residues 1 to 130 is disordered; sequence MSAGAGTPRR…TRGGVARSGN (130 aa). Tandem repeats lie at residues 36 to 49, 50 to 63, 64 to 77, 78 to 91, 92 to 105, and 106 to 119. The segment at 36 to 119 is 6 X 14 AA tandem repeats of P-[TA]-R-G-D-K-K-R-A-[RP]-R-[PL]-G-V; that stretch reads PTRGDKKRAR…DKKRARRPGV (84 aa). The segment at 148–613 is cysteinyl-tRNA synthetase; sequence VTIRLYDTSA…QGPRWSLGSR (466 aa). Residue Cys176 coordinates Zn(2+). The 'HIGH' region motif lies at 178 to 188; it reads ATVQAAPHIGH. Zn(2+) contacts are provided by Cys355, His380, and Glu384. A 'KMSKS' region motif is present at residues 411–415; sequence KMSKS. Lys414 serves as a coordination point for ATP.

This sequence belongs to the class-I aminoacyl-tRNA synthetase family. Monomer. Requires Zn(2+) as cofactor.

The protein resides in the cytoplasm. It carries out the reaction tRNA(Cys) + L-cysteine + ATP = L-cysteinyl-tRNA(Cys) + AMP + diphosphate. This chain is Cysteine--tRNA ligase, found in Streptomyces coelicolor (strain ATCC BAA-471 / A3(2) / M145).